A 360-amino-acid chain; its full sequence is Casein kinase II subunit alpha (360 aa).

The 286-residue stretch at 38 to 323 folds into the Protein kinase domain; it reads YQLVRKLGRG…AQEAMGHEYF (286 aa). ATP-binding positions include 44-52 and lysine 67; that span reads LGRGKYSEV. Residue aspartate 155 is the Proton acceptor of the active site. The segment at 334 to 360 is disordered; sequence NGTEQADGQGASNSASSQSSDAKIDGA. The segment covering 338-354 has biased composition (low complexity); the sequence is QADGQGASNSASSQSSD.

The protein belongs to the protein kinase superfamily. Ser/Thr protein kinase family. CK2 subfamily. Tetramer of two alpha and two beta chains. Expressed in a subset of the adult male sensory neurons: CEM head neurons, ray RnB neurons, and hook HOB tail neurons.

It localises to the cell projection. It is found in the axon. Its subcellular location is the cilium. The protein localises to the dendrite. The protein resides in the perikaryon. It carries out the reaction L-seryl-[protein] + ATP = O-phospho-L-seryl-[protein] + ADP + H(+). The enzyme catalyses L-threonyl-[protein] + ATP = O-phospho-L-threonyl-[protein] + ADP + H(+). Casein kinases are operationally defined by their preferential utilization of acidic proteins such as caseins as substrates. The alpha chain contains the catalytic site. May participate in Wnt signaling. Modulates two aspects of male mating behavior; response to hermaphrodite contact and vulval location, acting in the same pathway as lov-1 and pkd-2. The protein is Casein kinase II subunit alpha (kin-3) of Caenorhabditis elegans.